Consider the following 402-residue polypeptide: 26S proteasome non-ATPase regulatory subunit 4 homolog (402 aa).

Positions 5 to 189 constitute a VWFA domain; that stretch reads ATMICIDNSE…LSDVLISTPI (185 aa). Positions 221–240 constitute a UIM 1 domain; that stretch reads NVDPELALALRLSMEEERAR. The segment covering 241-261 has biased composition (basic and acidic residues); that stretch reads QEAIAKKAAEESSGAENKDHA. Disordered regions lie at residues 241–292 and 302–321; these read QEAI…EDDD and MSME…MAEA. UIM domains lie at 291 to 310 and 323 to 342; these read DDAQ…GSSG and VDDQ…AGGS. The interval 363–402 is disordered; sequence SLPGVDPNDPSVKDLLASLHGQGEQEKKEDKSDKPEDEKK. The span at 385-402 shows a compositional bias: basic and acidic residues; the sequence is GEQEKKEDKSDKPEDEKK.

Belongs to the proteasome subunit S5A family. In terms of assembly, component of the 19S regulatory particle (RP/PA700) base subcomplex of the 26S proteasome. The 26S proteasome is composed of a core protease (CP), known as the 20S proteasome, capped at one or both ends by the 19S regulatory particle (RP/PA700). The RP/PA700 complex is composed of at least 17 different subunits in two subcomplexes, the base and the lid, which form the portions proximal and distal to the 20S proteolytic core, respectively. Interacts with PI4KG4.

Its function is as follows. Plays a role in maintaining the structural integrity of the 19S regulatory particle (RP), subcomplex of the 26S proteasome. Plays a major role in both the direct and indirect recognition of ubiquitinated substrates of ubiquitin/26S proteasome-mediated proteolysis (UPP). Binds and presumably selects ubiquitin-conjugates for destruction. This is 26S proteasome non-ATPase regulatory subunit 4 homolog from Oryza sativa subsp. japonica (Rice).